Here is a 480-residue protein sequence, read N- to C-terminus: Chromosomal replication initiator protein DnaA (480 aa).

The segment at 1–73 (MNQDFWPFCL…GELGEEFHGQ (73 aa)) is domain I, interacts with DnaA modulators. Residues 73–143 (QPIQLELQLP…SANELAYDKT (71 aa)) form a domain II region. The domain III, AAA+ region stretch occupies residues 144–360 (RLNADFTFDT…GALNKVVAYA (217 aa)). The ATP site is built by Gly-188, Gly-190, Lys-191, and Thr-192. Residues 361-480 (RFHGRGISLE…VHVLTQVLRG (120 aa)) form a domain IV, binds dsDNA region.

The protein belongs to the DnaA family. As to quaternary structure, oligomerizes as a right-handed, spiral filament on DNA at oriC.

The protein resides in the cytoplasm. Plays an essential role in the initiation and regulation of chromosomal replication. ATP-DnaA binds to the origin of replication (oriC) to initiate formation of the DNA replication initiation complex once per cell cycle. Binds the DnaA box (a 9 base pair repeat at the origin) and separates the double-stranded (ds)DNA. Forms a right-handed helical filament on oriC DNA; dsDNA binds to the exterior of the filament while single-stranded (ss)DNA is stabiized in the filament's interior. The ATP-DnaA-oriC complex binds and stabilizes one strand of the AT-rich DNA unwinding element (DUE), permitting loading of DNA polymerase. After initiation quickly degrades to an ADP-DnaA complex that is not apt for DNA replication. Binds acidic phospholipids. The protein is Chromosomal replication initiator protein DnaA of Azoarcus sp. (strain BH72).